Here is a 100-residue protein sequence, read N- to C-terminus: Small ribosomal subunit protein uS14 (100 aa).

Residues Cys-63, Cys-66, Cys-79, and Cys-82 each contribute to the Zn(2+) site.

This sequence belongs to the universal ribosomal protein uS14 family. In terms of assembly, part of the 30S ribosomal subunit. Contacts proteins S3 and S10. It depends on Zn(2+) as a cofactor.

Functionally, binds 16S rRNA, required for the assembly of 30S particles and may also be responsible for determining the conformation of the 16S rRNA at the A site. This chain is Small ribosomal subunit protein uS14 (rpsN), found in Legionella pneumophila (strain Paris).